A 276-amino-acid polypeptide reads, in one-letter code: Putative olfactory receptor 10J6 (276 aa).

Residues 1-25 (MRRKNLTEVTEFVFLGFSRFHKHHI) lie on the Extracellular side of the membrane. The N-linked (GlcNAc...) asparagine glycan is linked to asparagine 5. Residues 26–46 (TLFVVFLILYTLTVAGNAIIM) form a helical membrane-spanning segment. At 47–54 (TIICIDRH) the chain is on the cytoplasmic side. Residues 55–75 (LHTPMYFFLSMLASSKTVYTL) traverse the membrane as a helical segment. Residues 76-99 (FIIPQMLSSFVTQTQPISLAGCTT) are Extracellular-facing. An intrachain disulfide couples cysteine 97 to cysteine 188. Residues 100–120 (QTFFFVTLAINNCFLLTVMGY) form a helical membrane-spanning segment. Residues 121 to 139 (DHYMAICNPLRYRVITSKK) are Cytoplasmic-facing. A helical transmembrane segment spans residues 140–160 (VCVQLVCGAFSIGLAMAAVQV). Topologically, residues 161 to 196 (TSIFTLPFCHTVVGHFFCDILPVMKLSCINTTINEI) are extracellular. Asparagine 190 is a glycosylation site (N-linked (GlcNAc...) asparagine). A helical transmembrane segment spans residues 197–216 (INFVVRLFVILVPMGLVFIS). At 217–236 (YVLIISTVLKIASAEGWKKT) the chain is on the cytoplasmic side. The chain crosses the membrane as a helical span at residues 237 to 257 (FATCAFHLTVVIVHYGCASIA). Residues 258–270 (YLMPKSENSIEQD) lie on the Extracellular side of the membrane. The helical transmembrane segment at 271 to 276 (LLLSVT) threads the bilayer.

It belongs to the G-protein coupled receptor 1 family.

Its subcellular location is the cell membrane. In terms of biological role, odorant receptor. This is Putative olfactory receptor 10J6 (OR10J6P) from Homo sapiens (Human).